Consider the following 156-residue polypeptide: E3 ubiquitin-protein ligase RNF181 (156 aa).

An RING-type; atypical zinc finger spans residues 79–120 (CPVCLLEFEEQESVREMPCKHLFHTGCILPWLNKTNSCPLCR). The tract at residues 135 to 156 (KDKERRRQREHRLEDLHGAMYT) is disordered.

This sequence belongs to the RNF181 family.

The catalysed reaction is S-ubiquitinyl-[E2 ubiquitin-conjugating enzyme]-L-cysteine + [acceptor protein]-L-lysine = [E2 ubiquitin-conjugating enzyme]-L-cysteine + N(6)-ubiquitinyl-[acceptor protein]-L-lysine.. It participates in protein modification; protein ubiquitination. In terms of biological role, E3 ubiquitin-protein ligase which accepts ubiquitin from an E2 ubiquitin-conjugating enzyme in the form of a thioester and then directly transfers the ubiquitin to targeted substrates. Catalyzes monoubiquitination of 26S proteasome subunit PSMC2/RPT1. The polypeptide is E3 ubiquitin-protein ligase RNF181 (rnf181) (Danio rerio (Zebrafish)).